Here is a 405-residue protein sequence, read N- to C-terminus: L-carnitine CoA-transferase (405 aa).

Positions 97 and 104 each coordinate CoA. Asp169 functions as the Nucleophile in the catalytic mechanism.

This sequence belongs to the CoA-transferase III family. CaiB subfamily. In terms of assembly, homodimer.

The protein resides in the cytoplasm. It carries out the reaction crotonobetainyl-CoA + (R)-carnitine = crotonobetaine + (R)-carnitinyl-CoA. The catalysed reaction is 4-(trimethylamino)butanoyl-CoA + (R)-carnitine = (R)-carnitinyl-CoA + 4-(trimethylamino)butanoate. It participates in amine and polyamine metabolism; carnitine metabolism. In terms of biological role, catalyzes the reversible transfer of the CoA moiety from gamma-butyrobetainyl-CoA to L-carnitine to generate L-carnitinyl-CoA and gamma-butyrobetaine. Is also able to catalyze the reversible transfer of the CoA moiety from gamma-butyrobetainyl-CoA or L-carnitinyl-CoA to crotonobetaine to generate crotonobetainyl-CoA. The sequence is that of L-carnitine CoA-transferase from Escherichia coli O127:H6 (strain E2348/69 / EPEC).